The sequence spans 644 residues: MTSYTSSILSQISSPEDLKKLSCSELSLLAEQIRHKIISVLIKTGGHLASNLGIIELTIALHYVFSSPEDKFIFDVGHQTYTHKLLTGRNIEEFERIRHDGGLSGFTSPLESAHDLFFSGHAGNALSLALGMAKATEKSRTHVLPILGDAAFSCGLTFEALNNIHTDLSKFIVILNDNNMSISKNVGVMSKSLSQWIHHPKFSLLSRKLERSLSKIPRYGKSIAKCSHKISTCLRSLVCPIPIFEQFNLAYMGPVDGHDIKALVSLFQKVRDLPFPILIHVCTKKGKGLEIAQENPTKYHGVKANFKLTAEDKLLPTIQPQLTYPDIFGKTVCKLGEISPNLHVVTPAMSLGSRLETFKGTFPERFIDVGIAEGHAVTFSAGIAKANTPVICSIYSTFLHRAMDNVFHDVCLQNLPVIFGIDRAGLAYGDGCSHHGIYDLSFLRAMPNMIICQPRSSIVFQQLLQSSLHWQRPSAIRYPNIPALQGDPIATDINLYRDPGLGEILSQGEDVLIVGLGHMCSAALSIKLQLLSHGISATVVDPIFIKPFDNNLFSILLMHHSKVIIIEEHSIRGGLASEFNDFLATYNFKVDVLHFGIPDSIFSHGDKENLLQRVGLDVDSMVKRILTYFNFRTKKAPSNKLSIV.

Residues H78 and 120 to 122 each bind thiamine diphosphate; that span reads GHA. D149 lines the Mg(2+) pocket. Thiamine diphosphate contacts are provided by residues 150 to 151, N178, and E373; that span reads AA. N178 serves as a coordination point for Mg(2+).

The protein belongs to the transketolase family. DXPS subfamily. In terms of assembly, homodimer. The cofactor is Mg(2+). Thiamine diphosphate serves as cofactor.

It catalyses the reaction D-glyceraldehyde 3-phosphate + pyruvate + H(+) = 1-deoxy-D-xylulose 5-phosphate + CO2. It participates in metabolic intermediate biosynthesis; 1-deoxy-D-xylulose 5-phosphate biosynthesis; 1-deoxy-D-xylulose 5-phosphate from D-glyceraldehyde 3-phosphate and pyruvate: step 1/1. Functionally, catalyzes the acyloin condensation reaction between C atoms 2 and 3 of pyruvate and glyceraldehyde 3-phosphate to yield 1-deoxy-D-xylulose-5-phosphate (DXP). The polypeptide is 1-deoxy-D-xylulose-5-phosphate synthase (Chlamydia abortus (strain DSM 27085 / S26/3) (Chlamydophila abortus)).